We begin with the raw amino-acid sequence, 422 residues long: MWELLAKGDPEVYEIVMKELGRQEEGLELIASENFVSPAVMEAMGSTLTNKYAEGYPRRRYYGGCKFVDEAEQLARERVKKLFNCKYANVQPHSGSQANMAAYLAVANPGDTIMGMSLSHGGHLTHGSPVNFSGKLFNIVSYGVDLETEVLDYDEIERLALEHKPKIIIAGGSAYSRIIDFKRFREIADKVGAYLIVDMAHFAGLVAAGLYPNPVDHAHIVTSTTHKTLRGPRGGLILTNDEELYKAINKAVFPGIQGGPLMHVIAAKAVAFGEALKDEFKEYQMRIITNAKALAKELENLGLRIVSGGTDTHLFLVDLNPKNVTGKAAEKALESADITVNKNTIPKETRSPFVTSGIRIGTPAVTTRGMGESEMKVIAELIVKVIDNIQDEKGTIPEEIREEVKKAVHELTEKFPLYKDLT.

(6S)-5,6,7,8-tetrahydrofolate contacts are provided by residues Leu118 and 122–124 (GHL). At Lys227 the chain carries N6-(pyridoxal phosphate)lysine. (6S)-5,6,7,8-tetrahydrofolate is bound by residues Glu243 and 351–353 (SPF).

Belongs to the SHMT family. Homodimer. Requires pyridoxal 5'-phosphate as cofactor.

The protein resides in the cytoplasm. It carries out the reaction (6R)-5,10-methylene-5,6,7,8-tetrahydrofolate + glycine + H2O = (6S)-5,6,7,8-tetrahydrofolate + L-serine. Its pathway is one-carbon metabolism; tetrahydrofolate interconversion. It functions in the pathway amino-acid biosynthesis; glycine biosynthesis; glycine from L-serine: step 1/1. In terms of biological role, catalyzes the reversible interconversion of serine and glycine with tetrahydrofolate (THF) serving as the one-carbon carrier. This reaction serves as the major source of one-carbon groups required for the biosynthesis of purines, thymidylate, methionine, and other important biomolecules. Also exhibits THF-independent aldolase activity toward beta-hydroxyamino acids, producing glycine and aldehydes, via a retro-aldol mechanism. The sequence is that of Serine hydroxymethyltransferase from Kosmotoga olearia (strain ATCC BAA-1733 / DSM 21960 / TBF 19.5.1).